The primary structure comprises 91 residues: Alpha-defensin-related sequence 10 (91 aa).

Positions 1-19 (MKKLVLLSAFVLLAFQVQA) are cleaved as a signal peptide. A propeptide spanning residues 20–65 (DSIQNTDEETKTEEQPGEENQAMSVSFGDPEGSALQDAAVGMARPC) is cleaved from the precursor. A disordered region spans residues 21–52 (SIQNTDEETKTEEQPGEENQAMSVSFGDPEGS). 7 repeat units span residues 65–67 (CPP), 68–70 (CPS), 71–73 (CPS), 74–76 (CPW), 77–79 (CPM), 80–82 (CPR), and 83–85 (CPS). The segment at 65–85 (CPPCPSCPSCPWCPMCPRCPS) is 7 X 3 AA tandem repeats of C-P-X.

The protein belongs to the alpha-defensin family. Paneth cells of the small bowel.

Its subcellular location is the secreted. Functionally, apparent precursor of a secreted, cationic, proline- and cysteine-rich peptide that contains Cys-Pro-Xaa repeats. Unlike cryptdin, the proposed mature peptide region lacks the structural motif characteristic of defensins. It may have microbicidal activities. This Mus musculus (Mouse) protein is Alpha-defensin-related sequence 10 (Defa-rs10).